The sequence spans 393 residues: Argininosuccinate synthase (393 aa).

Residues 7–15 and Ala-34 contribute to the ATP site; that span reads AYSGGLDTS. Positions 85 and 90 each coordinate L-citrulline. Gly-115 lines the ATP pocket. L-aspartate is bound by residues Thr-117, Asn-121, and Asp-122. Asn-121 lines the L-citrulline pocket. 5 residues coordinate L-citrulline: Arg-125, Ser-176, Ser-185, Glu-261, and Tyr-273.

It belongs to the argininosuccinate synthase family. Type 1 subfamily. In terms of assembly, homotetramer.

The protein localises to the cytoplasm. The enzyme catalyses L-citrulline + L-aspartate + ATP = 2-(N(omega)-L-arginino)succinate + AMP + diphosphate + H(+). It functions in the pathway amino-acid biosynthesis; L-arginine biosynthesis; L-arginine from L-ornithine and carbamoyl phosphate: step 2/3. In Ehrlichia chaffeensis (strain ATCC CRL-10679 / Arkansas), this protein is Argininosuccinate synthase.